Here is a 201-residue protein sequence, read N- to C-terminus: MSRYRGPRFKKIRRLGALPGLTNKRPRAGSDLRNQSRSGKKSQYRIRLEEKQKLRFHYGLTERQLLKYVRIAGKAKGSTGQVLLQLLEMRLDNILFRLGMAPTIPGARQLVNHRHILVNGRIVDIPSYRCKPRDTIAARDEQKSRALIQNSLDSSPPEELPNHLTLQPFQYKGLVNQIIDSKWVGLKINELLVVEYYSRQT.

Residues 15-44 (LGALPGLTNKRPRAGSDLRNQSRSGKKSQY) form a disordered region. The S4 RNA-binding domain maps to 89–149 (MRLDNILFRL…DEQKSRALIQ (61 aa)).

The protein belongs to the universal ribosomal protein uS4 family. In terms of assembly, part of the 30S ribosomal subunit. Contacts protein S5. The interaction surface between S4 and S5 is involved in control of translational fidelity.

The protein resides in the plastid. It is found in the chloroplast. In terms of biological role, one of the primary rRNA binding proteins, it binds directly to 16S rRNA where it nucleates assembly of the body of the 30S subunit. Functionally, with S5 and S12 plays an important role in translational accuracy. The sequence is that of Small ribosomal subunit protein uS4c (rps4) from Helianthus annuus (Common sunflower).